We begin with the raw amino-acid sequence, 105 residues long: NADH-quinone oxidoreductase subunit K (105 aa).

Helical transmembrane passes span 9–29, 34–54, and 65–85; these read PNYY…GVLV, IVLF…LVTF, and IIAF…LAII.

It belongs to the complex I subunit 4L family. NDH-1 is composed of 14 different subunits. Subunits NuoA, H, J, K, L, M, N constitute the membrane sector of the complex.

It is found in the cell membrane. The catalysed reaction is a quinone + NADH + 5 H(+)(in) = a quinol + NAD(+) + 4 H(+)(out). Functionally, NDH-1 shuttles electrons from NADH, via FMN and iron-sulfur (Fe-S) centers, to quinones in the respiratory chain. The immediate electron acceptor for the enzyme in this species is believed to be a menaquinone. Couples the redox reaction to proton translocation (for every two electrons transferred, four hydrogen ions are translocated across the cytoplasmic membrane), and thus conserves the redox energy in a proton gradient. In Salinispora arenicola (strain CNS-205), this protein is NADH-quinone oxidoreductase subunit K.